Consider the following 150-residue polypeptide: Phosphopantetheine adenylyltransferase (150 aa).

Residue T15 participates in substrate binding. ATP is bound by residues 15 to 16 and H23; that span reads TF. Substrate-binding residues include I80 and R94. ATP is bound by residues 95-97, E105, and 130-136; these read GIR and LENISSR.

Belongs to the bacterial CoaD family. As to quaternary structure, homohexamer. It depends on Mg(2+) as a cofactor.

It localises to the cytoplasm. The catalysed reaction is (R)-4'-phosphopantetheine + ATP + H(+) = 3'-dephospho-CoA + diphosphate. It participates in cofactor biosynthesis; coenzyme A biosynthesis; CoA from (R)-pantothenate: step 4/5. Its function is as follows. Reversibly transfers an adenylyl group from ATP to 4'-phosphopantetheine, yielding dephospho-CoA (dPCoA) and pyrophosphate. In Malacoplasma penetrans (strain HF-2) (Mycoplasma penetrans), this protein is Phosphopantetheine adenylyltransferase.